A 341-amino-acid polypeptide reads, in one-letter code: Serine/threonine-protein kinase PDIK1L (341 aa).

A Protein kinase domain is found at 8-334 (YDLIREVGRG…LELRLVQIAF (327 aa)). ATP contacts are provided by residues 14–22 (VGRGSYGVV) and K37. Residue D164 is the Proton acceptor of the active site.

This sequence belongs to the protein kinase superfamily. Ser/Thr protein kinase family. In terms of tissue distribution, expressed in liver, kidney, pancreas, spleen, thymus and prostate.

The protein resides in the nucleus. It catalyses the reaction L-seryl-[protein] + ATP = O-phospho-L-seryl-[protein] + ADP + H(+). The catalysed reaction is L-threonyl-[protein] + ATP = O-phospho-L-threonyl-[protein] + ADP + H(+). The polypeptide is Serine/threonine-protein kinase PDIK1L (PDIK1L) (Homo sapiens (Human)).